A 396-amino-acid polypeptide reads, in one-letter code: L-tyrosine/L-aspartate decarboxylase (396 aa).

Residue lysine 245 is modified to N6-(pyridoxal phosphate)lysine.

Belongs to the group II decarboxylase family. MfnA subfamily. In terms of assembly, homodimer. Requires pyridoxal 5'-phosphate as cofactor.

It carries out the reaction L-tyrosine + H(+) = tyramine + CO2. It catalyses the reaction L-aspartate + H(+) = beta-alanine + CO2. The protein operates within cofactor biosynthesis; methanofuran biosynthesis. It participates in cofactor biosynthesis; coenzyme A biosynthesis. Inhibited by hydroxylamine and O-methylhydroxylamine. Catalyzes the decarboxylation of L-tyrosine to produce tyramine for methanofuran biosynthesis. Can also catalyze the decarboxylation of L-aspartate to produce beta-alanine for coenzyme A (CoA) biosynthesis. In Methanocaldococcus jannaschii (strain ATCC 43067 / DSM 2661 / JAL-1 / JCM 10045 / NBRC 100440) (Methanococcus jannaschii), this protein is L-tyrosine/L-aspartate decarboxylase.